A 236-amino-acid chain; its full sequence is Ribonuclease 3 (236 aa).

Residues 6–140 enclose the RNase III domain; the sequence is FLDFLKQNRI…FIGAVAQDQG (135 aa). E46 provides a ligand contact to Mg(2+). The active site involves D50. 2 residues coordinate Mg(2+): D126 and E129. Residue E129 is part of the active site. The DRBM domain occupies 166-231; it reads DYKTIFQEQA…AKNAILKLDD (66 aa).

It belongs to the ribonuclease III family. As to quaternary structure, homodimer. Mg(2+) is required as a cofactor.

The protein resides in the cytoplasm. The enzyme catalyses Endonucleolytic cleavage to 5'-phosphomonoester.. Digests double-stranded RNA. Involved in the processing of primary rRNA transcript to yield the immediate precursors to the large and small rRNAs (23S and 16S). Processes some mRNAs, and tRNAs when they are encoded in the rRNA operon. Processes pre-crRNA and tracrRNA of type II CRISPR loci if present in the organism. The polypeptide is Ribonuclease 3 (Ureaplasma parvum serovar 3 (strain ATCC 700970)).